Consider the following 520-residue polypeptide: Gamma aminobutyrate transaminase 3, chloroplastic (520 aa).

Residues 1–44 constitute a chloroplast transit peptide; sequence MAKITSLIGSGIVAATNQVGPHVKHIPAVGNLQKQIVSDQIQVR. 172 to 173 contributes to the pyridoxal 5'-phosphate binding site; that stretch reads GS. Residue tyrosine 205 coordinates substrate. Aspartate 312 contacts pyridoxal 5'-phosphate. Residue lysine 341 coordinates substrate. Lysine 341 carries the N6-(pyridoxal phosphate)lysine modification.

The protein belongs to the class-III pyridoxal-phosphate-dependent aminotransferase family. Expressed in leaves, roots, stems, flowers and fruits.

It localises to the plastid. Its subcellular location is the chloroplast. It carries out the reaction 4-aminobutanoate + pyruvate = succinate semialdehyde + L-alanine. It catalyses the reaction 4-aminobutanoate + glyoxylate = succinate semialdehyde + glycine. Its function is as follows. Transaminase that degrades gamma-amino butyric acid (GABA) and uses pyruvate or glyoxylate as amino-group acceptor. Cannot use beta-alanine, ornithine, acetylornithine, serine, glycine, asparagine, glutamine, glutamate, valine, leucine, isoleucine, methionine, phenylalanine, histidine, lysine, arginine, aspartate, threonine, tyrosine, tryptophan, proline, or cysteine as amino donors. The chain is Gamma aminobutyrate transaminase 3, chloroplastic (GABA-TP3) from Solanum lycopersicum (Tomato).